The following is a 309-amino-acid chain: Homoserine kinase (309 aa).

Position 91-101 (91-101 (PIGSGLGSSAC)) interacts with ATP.

The protein belongs to the GHMP kinase family. Homoserine kinase subfamily.

The protein resides in the cytoplasm. It catalyses the reaction L-homoserine + ATP = O-phospho-L-homoserine + ADP + H(+). The protein operates within amino-acid biosynthesis; L-threonine biosynthesis; L-threonine from L-aspartate: step 4/5. Catalyzes the ATP-dependent phosphorylation of L-homoserine to L-homoserine phosphate. The sequence is that of Homoserine kinase from Erwinia tasmaniensis (strain DSM 17950 / CFBP 7177 / CIP 109463 / NCPPB 4357 / Et1/99).